A 538-amino-acid chain; its full sequence is CWF19-like protein 1 (538 aa).

2 disordered regions span residues Pro259–Gln278 and Gln298–Pro324.

It belongs to the CWF19 family.

The chain is CWF19-like protein 1 (CWF19L1) from Pongo abelii (Sumatran orangutan).